The chain runs to 277 residues: Raffinose operon transcriptional regulatory protein RafR (277 aa).

Residues 176-274 (NLAVSYLQEN…GASPSYYRKS (99 aa)) enclose the HTH araC/xylS-type domain. 2 consecutive DNA-binding regions (H-T-H motif) follow at residues 193–214 (MDLC…KTHA) and 241–264 (VQSI…KRYS).

In terms of biological role, involved in the regulation of the raffinose-operon. The sequence is that of Raffinose operon transcriptional regulatory protein RafR (rafR) from Pediococcus pentosaceus.